The sequence spans 701 residues: Polyribonucleotide nucleotidyltransferase (701 aa).

Residues Asp-487 and Asp-493 each coordinate Mg(2+). The 60-residue stretch at 554–613 (PTMIAMKIDTDKIRDVIGKGGATIRAICEETKASIDIEDDGSIKIFGETKEAADAAKQRI) folds into the KH domain. In terms of domain architecture, S1 motif spans 623 to 691 (GKIYVGKVER…NRGRIKLSIK (69 aa)).

This sequence belongs to the polyribonucleotide nucleotidyltransferase family. In terms of assembly, component of the RNA degradosome, which is a multiprotein complex involved in RNA processing and mRNA degradation. It depends on Mg(2+) as a cofactor.

The protein localises to the cytoplasm. It carries out the reaction RNA(n+1) + phosphate = RNA(n) + a ribonucleoside 5'-diphosphate. In terms of biological role, involved in mRNA degradation. Catalyzes the phosphorolysis of single-stranded polyribonucleotides processively in the 3'- to 5'-direction. This is Polyribonucleotide nucleotidyltransferase from Pseudomonas putida (Arthrobacter siderocapsulatus).